The chain runs to 566 residues: MPVNRYRPFAEEVEHIRVTDRTWPDRVIDRAPLWCAVDLRDGNQALIDPMSPARKRRMFDLLVRMGYKEIEVGFPSASQTDFDFVREIITEGAIPDDVTIQVLTQCRPELIERTFEACAGASKVIVHFYNSTSILQRRVVFRADRAAVEAIATDGARRCVEEAAKYPDTQWRFEYSPESYTGTELEYAKQVCDAVAEVIQPTPENPIIFNLPATVEMATPNVYADSIEWMSRNLANRESVILSLHPHNDRGTAVAAAELGFAAGADRIEGCLFGNGERTGNVCLATLGLNLFSRGVDPQIDFSNIDEIRRTVEYCNQLPVPERHPYGGDLVYTAFSGSHQDAINKGLDAMEFDADAADSDMDDMLWQVPYLPIDPKDVGRTYEAVIRVNSQSGKGGVAYIMKADHGLALPRRLQIEFSRAIQEIAEGSAGEGGEVSPKEMWDAFAEEYLAPVRPLERIKQRVIAAEEDGGTTSIDATVKIDGKEAEISGSGNGPLAAFVHALGTVGFDVAVLDYSEHAMSAGDDAQAAAYVEASVAGKTVWGVGIAPSITTASLRAVVSAINRASR.

Residues 32-306 form the Pyruvate carboxyltransferase domain; it reads PLWCAVDLRD…DPQIDFSNID (275 aa). Residues aspartate 41, histidine 245, histidine 247, and asparagine 281 each coordinate Mg(2+). Residues 451–566 are regulatory domain; it reads PVRPLERIKQ…VVSAINRASR (116 aa).

Belongs to the alpha-IPM synthase/homocitrate synthase family. LeuA type 2 subfamily. Homodimer. Mg(2+) serves as cofactor.

It is found in the cytoplasm. The enzyme catalyses 3-methyl-2-oxobutanoate + acetyl-CoA + H2O = (2S)-2-isopropylmalate + CoA + H(+). Its pathway is amino-acid biosynthesis; L-leucine biosynthesis; L-leucine from 3-methyl-2-oxobutanoate: step 1/4. Catalyzes the condensation of the acetyl group of acetyl-CoA with 3-methyl-2-oxobutanoate (2-ketoisovalerate) to form 3-carboxy-3-hydroxy-4-methylpentanoate (2-isopropylmalate). This chain is 2-isopropylmalate synthase, found in Mycobacterium ulcerans (strain Agy99).